Reading from the N-terminus, the 420-residue chain is Glycerol-3-phosphate dehydrogenase [NAD(+)] (420 aa).

Residues 16 to 21 (GSGNWG), Phe-48, and Phe-119 each bind NAD(+). Lys-142 serves as a coordination point for substrate. Residue Ala-175 coordinates NAD(+). The disordered stretch occupies residues 190–217 (YDPPPMDNSRAPTPRSNSPANGNGIAPL). The span at 199–210 (RAPTPRSNSPAN) shows a compositional bias: polar residues. Lys-278 (proton acceptor) is an active-site residue. NAD(+) contacts are provided by Arg-344 and Gln-373. 344 to 345 (RN) contacts substrate.

The protein belongs to the NAD-dependent glycerol-3-phosphate dehydrogenase family.

The enzyme catalyses sn-glycerol 3-phosphate + NAD(+) = dihydroxyacetone phosphate + NADH + H(+). The protein is Glycerol-3-phosphate dehydrogenase [NAD(+)] of Colletotrichum gloeosporioides (Anthracnose fungus).